Consider the following 389-residue polypeptide: Aspartate aminotransferase (389 aa).

G34 and N171 together coordinate L-aspartate. K233 is subject to N6-(pyridoxal phosphate)lysine. R362 provides a ligand contact to L-aspartate.

The protein belongs to the class-I pyridoxal-phosphate-dependent aminotransferase family. Homodimer. The cofactor is pyridoxal 5'-phosphate.

It is found in the cytoplasm. It catalyses the reaction L-aspartate + 2-oxoglutarate = oxaloacetate + L-glutamate. The sequence is that of Aspartate aminotransferase (aspC) from Pyrococcus abyssi (strain GE5 / Orsay).